Here is a 355-residue protein sequence, read N- to C-terminus: Na(+)/H(+) exchange regulatory cofactor NHE-RF1 (355 aa).

Serine 2 is modified (N-acetylserine). Phosphoserine occurs at positions 2 and 46. The PDZ 1 domain occupies 14-94 (LCCLEKGPNG…AVRLLVVDPE (81 aa)). Composition is skewed to basic and acidic residues over residues 110–119 (LLRPQEKSEQ) and 127–146 (DTHE…RELR). Positions 110–146 (LLRPQEKSEQAEPPAAADTHEAGDQNEAEKSHLRELR) are disordered. A PDZ 2 domain is found at 149 to 229 (LCTMKKGPNG…EAKLLVVDKE (81 aa)). The interval 244-355 (EHLDGPLPEP…SKKNELFSNL (112 aa)) is disordered. The segment covering 259 to 268 (IQKESSREAL) has biased composition (basic and acidic residues). A phosphoserine mark is found at serine 264, serine 275, serine 285, and serine 286. Positions 270 to 286 (EPASESPRPALARSASS) are enriched in low complexity. Position 288 is a phosphothreonine (threonine 288). 3 positions are modified to phosphoserine: serine 289, serine 294, and serine 297. Over residues 303–323 (STEPSSTSSSSSDPILDLNIS) the composition is skewed to low complexity. Residues 345 to 355 (WSKKNELFSNL) are compositionally biased toward basic and acidic residues.

As to quaternary structure, homodimer, and heterodimer with NHERF2. Binds the N-termini of EZR, RDX and MSN. Binds the C-termini of PDGFRA, PDGFRB, ADRB2 and NOS2. Binds ARHGAP17, EPI64, RACK1, OPRK1, GNAQ, CTNNB1, PLCB3 and CLCN3. Forms a complex with CFTR and SLC4A7. Forms a complex with SLC4A7 and ATP6V1B1. Binds PDZK1. Binds the C-terminus of PAG1. In resting T-cells, part of a PAG1-NHERF1-MSN complex which is disrupted upon TCR activation. Directly interacts with HTR4. Interacts with MCC. Interacts with TRPC4 (via the PDZ-binding domain). Interacts (via the PDZ 1 domain) with PODXL (via the C-terminal PDZ-binding motif DTHL); interaction is not detected in glomerular epithelium cells. Interacts (via the PDZ 1 domain) with PODXL (via the C-terminal PDZ-binding motif DTHL); the interaction take place early in the secretory pathway and is necessary for its apical membrane sorting. Interacts with SLC34A1. Interacts with CFTR, SLC26A3 and SLC26A6. Interacts (via PDZ domains) with ACE2 (via PDZ-binding motif); the interaction may enhance ACE2 membrane residence. As to expression, expressed in spermatogenic cells.

It localises to the cytoplasm. The protein resides in the apical cell membrane. The protein localises to the cell projection. Its subcellular location is the filopodium. It is found in the ruffle. It localises to the microvillus. The protein resides in the endomembrane system. Functionally, scaffold protein that connects plasma membrane proteins with members of the ezrin/moesin/radixin family and thereby helps to link them to the actin cytoskeleton and to regulate their surface expression. Necessary for recycling of internalized ADRB2. Was first known to play a role in the regulation of the activity and subcellular location of SLC9A3. Necessary for cAMP-mediated phosphorylation and inhibition of SLC9A3. May enhance Wnt signaling. May participate in HTR4 targeting to microvilli. Involved in the regulation of phosphate reabsorption in the renal proximal tubules. Involved in sperm capacitation. May participate in the regulation of the chloride and bicarbonate homeostasis in spermatozoa. The protein is Na(+)/H(+) exchange regulatory cofactor NHE-RF1 (Nherf1) of Mus musculus (Mouse).